Reading from the N-terminus, the 230-residue chain is UPF0500 protein C1orf216 homolog (230 aa).

The disordered stretch occupies residues Met1–Ser103. Over residues Arg60 to Gln73 the composition is skewed to polar residues. Positions Pro85–Ala94 are enriched in low complexity.

This sequence belongs to the UPF0500 family.

The polypeptide is UPF0500 protein C1orf216 homolog (Mus musculus (Mouse)).